We begin with the raw amino-acid sequence, 159 residues long: Ribosome maturation factor RimP (159 aa).

The protein belongs to the RimP family.

It localises to the cytoplasm. In terms of biological role, required for maturation of 30S ribosomal subunits. The polypeptide is Ribosome maturation factor RimP (Bordetella avium (strain 197N)).